We begin with the raw amino-acid sequence, 384 residues long: Actin-binding Rho-activating protein (384 aa).

Over residues 1–11 (MARGEKGRGEG) the composition is skewed to basic and acidic residues. 3 disordered regions span residues 1–20 (MARG…LRKV), 32–159 (GWQQ…SPTR), and 181–211 (EQEE…EQDG). Residues 35 to 47 (QWANENSTRQAQE) are compositionally biased toward polar residues. Residues 134-145 (DGDEPEPEQPES) are compositionally biased toward acidic residues. Residues Ser-156 and Ser-191 each carry the phosphoserine modification. Actin-binding stretches follow at residues 202 to 302 (ETEE…AERA) and 303 to 384 (KRAE…TLLK). Interaction with actin stretches follow at residues 243–288 (SQVG…GDEG) and 355–384 (MRAR…TLLK).

In terms of assembly, binds F-actin and ABLIM1, ABLIM2 and ABLIM3. Interaction with ABLIM2 and ABLIM3 enhances activity. As to expression, specifically expressed in heart and skeletal muscles.

It is found in the cytoplasm. The protein resides in the myofibril. It localises to the sarcomere. Its subcellular location is the cytoskeleton. Functionally, acts as an activator of serum response factor (SRF)-dependent transcription possibly by inducing nuclear translocation of MKL1 or MKL2 and through a mechanism requiring Rho-actin signaling. The polypeptide is Actin-binding Rho-activating protein (ABRA) (Sus scrofa (Pig)).